The chain runs to 597 residues: Elongation factor 4 (597 aa).

The 183-residue stretch at 2-184 (DHIRNFSIIA…ALIAKVPPPK (183 aa)) folds into the tr-type G domain. Residues 14–19 (DHGKST) and 131–134 (NKID) contribute to the GTP site.

Belongs to the TRAFAC class translation factor GTPase superfamily. Classic translation factor GTPase family. LepA subfamily.

The protein resides in the cell inner membrane. It catalyses the reaction GTP + H2O = GDP + phosphate + H(+). In terms of biological role, required for accurate and efficient protein synthesis under certain stress conditions. May act as a fidelity factor of the translation reaction, by catalyzing a one-codon backward translocation of tRNAs on improperly translocated ribosomes. Back-translocation proceeds from a post-translocation (POST) complex to a pre-translocation (PRE) complex, thus giving elongation factor G a second chance to translocate the tRNAs correctly. Binds to ribosomes in a GTP-dependent manner. The chain is Elongation factor 4 from Burkholderia vietnamiensis (strain G4 / LMG 22486) (Burkholderia cepacia (strain R1808)).